The chain runs to 160 residues: Leptin (160 aa).

The N-terminal stretch at 1 to 17 is a signal peptide; it reads MDYTLALALSLLQLSMC. Cys-109 and Cys-160 are joined by a disulfide.

The protein belongs to the leptin family.

It is found in the secreted. Its function is as follows. May function as part of a signaling pathway that acts to regulate the size of the body fat depot. This Tetraodon nigroviridis (Spotted green pufferfish) protein is Leptin (lep).